The following is an 80-amino-acid chain: Serine rich endogenous peptide 18 (80 aa).

A signal peptide spans 1 to 25; that stretch reads MYNVVVCLLTLSFLLLTGLSNTAEA. The SCOOP motif signature appears at 45–59; sequence KAEVGGSCSPHAHGR. The disordered stretch occupies residues 50 to 80; the sequence is GSCSPHAHGRGPPNRPGSSNIPGSPKRCTKP. The SxS motif essential for MIK2 binding motif lies at 51-53; that stretch reads SCS.

This sequence belongs to the serine rich endogenous peptide (SCOOP) phytocytokine family. Interacts with MIK2 (via extracellular leucine-rich repeat domain); this interaction triggers the formation of complex between MIK2 and the BAK1/SERK3 and SERK4 coreceptors, and subsequent BAK1 activation by phosphorylation.

It localises to the cell membrane. The protein resides in the secreted. It is found in the extracellular space. Its subcellular location is the apoplast. Brassicaceae-specific phytocytokine (plant endogenous peptide released into the apoplast) perceived by MIK2 in a BAK1/SERK3 and SERK4 coreceptors-dependent manner, that modulates various physiological and antimicrobial processes including growth prevention and reactive oxygen species (ROS) response regulation. The chain is Serine rich endogenous peptide 18 from Arabidopsis thaliana (Mouse-ear cress).